Reading from the N-terminus, the 178-residue chain is Interleukin-17B (178 aa).

Residues 1–22 (MDWPHSLLFLLAISIFLGPSQP) form the signal peptide. The segment at 21-44 (QPRNTKGKRKGQVRPGPLAPGPHQ) is disordered. The N-linked (GlcNAc...) asparagine glycan is linked to Asn-75. 2 cysteine pairs are disulfide-bonded: Cys-121-Cys-176 and Cys-126-Cys-178.

The protein belongs to the IL-17 family.

The protein resides in the secreted. Functionally, stimulates the release of tumor necrosis factor alpha and IL-1-beta from the monocytic cell line THP-1. This chain is Interleukin-17B (IL17B), found in Mesocricetus auratus (Golden hamster).